Here is a 241-residue protein sequence, read N- to C-terminus: MAVWGPGGRLGLRGCLGARKLLCPRFQSRGPQGVEDGDRPQPSSKTPKVPKIYTKTGDKGFSSTFTGERRSKDDQVFEAVGTTDELSSAIGFAMELIAEKGHPFVEELQKIQCSLQDVGSALATPRSSAREAHLKHATFEAGPILELEQWIDKYSRQLPPLTAFILPSGGKSSSALHFCRAVCRRAERRVVPLVQTGETDANVVKFLNRLSDYLFTLARYTAMKEGNPEKIYKKNDLSDRT.

The transit peptide at 1–26 directs the protein to the mitochondrion; sequence MAVWGPGGRLGLRGCLGARKLLCPRF. The tract at residues 27–69 is disordered; sequence QSRGPQGVEDGDRPQPSSKTPKVPKIYTKTGDKGFSSTFTGER. ATP is bound by residues 54 to 63 and K72; that span reads TKTGDKGFSS. S128 carries the phosphoserine modification. Position 184–188 (184–188) interacts with ATP; the sequence is RRAER. K205 is modified (N6-succinyllysine). An ATP-binding site is contributed by N208. An N6-acetyllysine; alternate modification is found at K224. N6-succinyllysine; alternate is present on K224.

It belongs to the Cob(I)alamin adenosyltransferase family. In terms of assembly, homotrimer.

It localises to the mitochondrion. The catalysed reaction is cob(I)alamin-[corrinoid adenosyltransferase] + ATP = apo-[corrinoid adenosyltransferase] + adenosylcob(III)alamin + triphosphate. Converts cob(I)alamin to adenosylcobalamin (adenosylcob(III)alamin), a coenzyme for methylmalonyl-CoA mutase, therefore participates in the final step of the vitamin B12 conversion. Generates adenosylcobalamin (AdoCbl) and directly delivers the cofactor to MUT in a transfer that is stimulated by ATP-binding to MMAB and gated by MMAA. The polypeptide is Corrinoid adenosyltransferase MMAB (Bos taurus (Bovine)).